The following is a 312-amino-acid chain: Urease accessory protein UreD (312 aa).

A disordered region spans residues 1–50 (MRPLAPDARCAPSRPGRGPWYARRPVTTPSDPPAALREPPPPARRAGKAG).

The protein belongs to the UreD family. In terms of assembly, ureD, UreF and UreG form a complex that acts as a GTP-hydrolysis-dependent molecular chaperone, activating the urease apoprotein by helping to assemble the nickel containing metallocenter of UreC. The UreE protein probably delivers the nickel.

Its subcellular location is the cytoplasm. In terms of biological role, required for maturation of urease via the functional incorporation of the urease nickel metallocenter. This is Urease accessory protein UreD from Sorangium cellulosum (strain So ce56) (Polyangium cellulosum (strain So ce56)).